A 59-amino-acid chain; its full sequence is Three-finger toxin MS1 (59 aa).

4 cysteine pairs are disulfide-bonded: Cys-3–Cys-22, Cys-17–Cys-39, Cys-41–Cys-52, and Cys-53–Cys-58.

It belongs to the three-finger toxin family. Short-chain subfamily. Type I alpha-neurotoxin sub-subfamily. Expressed by the venom gland.

It is found in the secreted. Produces peripheral paralysis by blocking neuromuscular transmission at the postsynaptic site. Binds to and inhibits the endogenous nicotinic acetylcholine receptors (nAChR) in human rhabdomyosarcoma TE 671 cell line with an IC(50) of 48.2 mM. This neurotoxin is lethal to mice by intraperitoneal injection and to zebrafish by injection at the back of the dorsolateral region. This Micrurus surinamensis (Surinam coral snake) protein is Three-finger toxin MS1.